A 350-amino-acid polypeptide reads, in one-letter code: Biotin synthase (350 aa).

The Radical SAM core domain occupies 38–256 (NYVQVSTLLS…IAVARIMMPE (219 aa)). [4Fe-4S] cluster contacts are provided by C53, C57, and C60. [2Fe-2S] cluster-binding residues include C97, C128, C188, and R260.

The protein belongs to the radical SAM superfamily. Biotin synthase family. Homodimer. Requires [4Fe-4S] cluster as cofactor. The cofactor is [2Fe-2S] cluster.

The enzyme catalyses (4R,5S)-dethiobiotin + (sulfur carrier)-SH + 2 reduced [2Fe-2S]-[ferredoxin] + 2 S-adenosyl-L-methionine = (sulfur carrier)-H + biotin + 2 5'-deoxyadenosine + 2 L-methionine + 2 oxidized [2Fe-2S]-[ferredoxin]. It participates in cofactor biosynthesis; biotin biosynthesis; biotin from 7,8-diaminononanoate: step 2/2. In terms of biological role, catalyzes the conversion of dethiobiotin (DTB) to biotin by the insertion of a sulfur atom into dethiobiotin via a radical-based mechanism. The polypeptide is Biotin synthase (Aliivibrio salmonicida (strain LFI1238) (Vibrio salmonicida (strain LFI1238))).